The chain runs to 453 residues: Bifunctional protein GlmU (453 aa).

Positions 1 to 225 (MNIVILAAGT…EWETLGVNSK (225 aa)) are pyrophosphorylase. UDP-N-acetyl-alpha-D-glucosamine contacts are provided by residues 6–9 (LAAG), Lys-20, Gln-71, 76–77 (GT), 98–100 (YGD), Gly-135, Glu-150, Asn-165, and Asn-223. Mg(2+) is bound at residue Asp-100. Asn-223 provides a ligand contact to Mg(2+). The segment at 226 to 246 (QQLAELERIHQRNVADALLVA) is linker. An N-acetyltransferase region spans residues 247 to 453 (GVTLADPARL…GYVRPTKKKS (207 aa)). Arg-329 and Lys-347 together coordinate UDP-N-acetyl-alpha-D-glucosamine. His-359 (proton acceptor) is an active-site residue. Residues Tyr-362 and Asn-373 each contribute to the UDP-N-acetyl-alpha-D-glucosamine site. Acetyl-CoA contacts are provided by residues Ala-376, 382 to 383 (NY), Ser-401, and Ala-419.

In the N-terminal section; belongs to the N-acetylglucosamine-1-phosphate uridyltransferase family. This sequence in the C-terminal section; belongs to the transferase hexapeptide repeat family. Homotrimer. Mg(2+) serves as cofactor.

The protein resides in the cytoplasm. The enzyme catalyses alpha-D-glucosamine 1-phosphate + acetyl-CoA = N-acetyl-alpha-D-glucosamine 1-phosphate + CoA + H(+). It catalyses the reaction N-acetyl-alpha-D-glucosamine 1-phosphate + UTP + H(+) = UDP-N-acetyl-alpha-D-glucosamine + diphosphate. It functions in the pathway nucleotide-sugar biosynthesis; UDP-N-acetyl-alpha-D-glucosamine biosynthesis; N-acetyl-alpha-D-glucosamine 1-phosphate from alpha-D-glucosamine 6-phosphate (route II): step 2/2. Its pathway is nucleotide-sugar biosynthesis; UDP-N-acetyl-alpha-D-glucosamine biosynthesis; UDP-N-acetyl-alpha-D-glucosamine from N-acetyl-alpha-D-glucosamine 1-phosphate: step 1/1. The protein operates within bacterial outer membrane biogenesis; LPS lipid A biosynthesis. Its function is as follows. Catalyzes the last two sequential reactions in the de novo biosynthetic pathway for UDP-N-acetylglucosamine (UDP-GlcNAc). The C-terminal domain catalyzes the transfer of acetyl group from acetyl coenzyme A to glucosamine-1-phosphate (GlcN-1-P) to produce N-acetylglucosamine-1-phosphate (GlcNAc-1-P), which is converted into UDP-GlcNAc by the transfer of uridine 5-monophosphate (from uridine 5-triphosphate), a reaction catalyzed by the N-terminal domain. The protein is Bifunctional protein GlmU of Paraburkholderia xenovorans (strain LB400).